The following is a 160-amino-acid chain: SsrA-binding protein (160 aa).

The interval 130–160 (LAKGKKKHDKRADQKEQDWQRQKQRLMKHKV) is disordered. Residues 139-150 (KRADQKEQDWQR) show a composition bias toward basic and acidic residues. The segment covering 151–160 (QKQRLMKHKV) has biased composition (basic residues).

Belongs to the SmpB family.

The protein localises to the cytoplasm. Its function is as follows. Required for rescue of stalled ribosomes mediated by trans-translation. Binds to transfer-messenger RNA (tmRNA), required for stable association of tmRNA with ribosomes. tmRNA and SmpB together mimic tRNA shape, replacing the anticodon stem-loop with SmpB. tmRNA is encoded by the ssrA gene; the 2 termini fold to resemble tRNA(Ala) and it encodes a 'tag peptide', a short internal open reading frame. During trans-translation Ala-aminoacylated tmRNA acts like a tRNA, entering the A-site of stalled ribosomes, displacing the stalled mRNA. The ribosome then switches to translate the ORF on the tmRNA; the nascent peptide is terminated with the 'tag peptide' encoded by the tmRNA and targeted for degradation. The ribosome is freed to recommence translation, which seems to be the essential function of trans-translation. The chain is SsrA-binding protein from Alkalilimnicola ehrlichii (strain ATCC BAA-1101 / DSM 17681 / MLHE-1).